A 440-amino-acid polypeptide reads, in one-letter code: Rhamnogalacturonase A (440 aa).

Residues M1–G18 form the signal peptide. A disulfide bond links C39 and C65. N50 carries N-linked (GlcNAc...) asparagine glycosylation. D215 serves as the catalytic Proton donor. The cysteines at positions 217 and 234 are disulfide-linked. The active site involves H290. N317 carries an N-linked (GlcNAc...) asparagine glycan. Cystine bridges form between C340/C346 and C368/C377. O-linked (Man) threonine glycosylation occurs at T385. S386 is a glycosylation site (O-linked (Man) serine). Residues T388, T389, and T390 are each glycosylated (O-linked (Man) threonine). S391 carries O-linked (Man) serine glycosylation. Residues T392 and T394 are each glycosylated (O-linked (Man) threonine). Residues S398 and S401 are each glycosylated (O-linked (Man) serine). Residues T403, T404, and T416 are each glycosylated (O-linked (Man) threonine). An O-linked (Man) serine glycan is attached at S418. T423 and T426 each carry an O-linked (Man) threonine glycan. O-linked (Man) serine glycosylation is found at S427 and S436.

The protein belongs to the glycosyl hydrolase 28 family. In terms of processing, the N-terminus is blocked. N-glycosylated and may also be O-glycosylated.

The protein resides in the secreted. The catalysed reaction is Endohydrolysis of alpha-D-GalA-(1-&gt;2)-alpha-L-Rha glycosidic bond in the rhamnogalacturonan I backbone with initial inversion of anomeric configuration releasing oligosaccharides with beta-D-GalA at the reducing end.. Its function is as follows. Pectinolytic enzymes consist of four classes of enzymes: pectine lyase, polygalacturonase, pectin methylesterase and rhamnogalacturonase. Has a positive effect in the apple hot-mash liquefaction process. Hydrolyzes alpha-D-galacturonopyranosyl-(1,2)-alpha-L-rhamnopyranosyl linkages in the backbone of the hairy regions of pectins. The chain is Rhamnogalacturonase A (rhgA) from Aspergillus aculeatus.